Reading from the N-terminus, the 366-residue chain is Carbamoyl phosphate synthase small chain (366 aa).

Positions 1–170 (MLKKRYLVLE…TKSPYVSTGY (170 aa)) are CPSase. The L-glutamine site is built by Ser47, Gly221, and Gly223. The 188-residue stretch at 173 to 360 (SVVLVDFGKK…IDMINEYKTK (188 aa)) folds into the Glutamine amidotransferase type-1 domain. The Nucleophile role is filled by Cys248. Residues Leu249, Gln252, Asn290, Gly292, and Tyr293 each coordinate L-glutamine. Catalysis depends on residues His333 and Glu335.

The protein belongs to the CarA family. Composed of two chains; the small (or glutamine) chain promotes the hydrolysis of glutamine to ammonia, which is used by the large (or ammonia) chain to synthesize carbamoyl phosphate. Tetramer of heterodimers (alpha,beta)4.

The enzyme catalyses hydrogencarbonate + L-glutamine + 2 ATP + H2O = carbamoyl phosphate + L-glutamate + 2 ADP + phosphate + 2 H(+). The catalysed reaction is L-glutamine + H2O = L-glutamate + NH4(+). Its pathway is amino-acid biosynthesis; L-arginine biosynthesis; carbamoyl phosphate from bicarbonate: step 1/1. The protein operates within pyrimidine metabolism; UMP biosynthesis via de novo pathway; (S)-dihydroorotate from bicarbonate: step 1/3. Its function is as follows. Small subunit of the glutamine-dependent carbamoyl phosphate synthetase (CPSase). CPSase catalyzes the formation of carbamoyl phosphate from the ammonia moiety of glutamine, carbonate, and phosphate donated by ATP, constituting the first step of 2 biosynthetic pathways, one leading to arginine and/or urea and the other to pyrimidine nucleotides. The small subunit (glutamine amidotransferase) binds and cleaves glutamine to supply the large subunit with the substrate ammonia. The sequence is that of Carbamoyl phosphate synthase small chain from Staphylococcus saprophyticus subsp. saprophyticus (strain ATCC 15305 / DSM 20229 / NCIMB 8711 / NCTC 7292 / S-41).